The following is a 104-amino-acid chain: Large ribosomal subunit protein bL21 (104 aa).

Belongs to the bacterial ribosomal protein bL21 family. In terms of assembly, part of the 50S ribosomal subunit. Contacts protein L20.

Its function is as follows. This protein binds to 23S rRNA in the presence of protein L20. This chain is Large ribosomal subunit protein bL21, found in Tropheryma whipplei (strain TW08/27) (Whipple's bacillus).